A 509-amino-acid polypeptide reads, in one-letter code: Maturase K (509 aa).

Belongs to the intron maturase 2 family. MatK subfamily.

It is found in the plastid. The protein localises to the chloroplast. Its function is as follows. Usually encoded in the trnK tRNA gene intron. Probably assists in splicing its own and other chloroplast group II introns. The polypeptide is Maturase K (Sequoia sempervirens (California redwood)).